A 165-amino-acid chain; its full sequence is Lipoprotein signal peptidase (165 aa).

A run of 3 helical transmembrane segments spans residues 9–29 (PFLWISAVAFFTDLITKLAVV), 65–85 (WQKYFFILLALAVSFMILFFL), and 97–119 (TGYALMIGGALANAADRAYHGFV). Catalysis depends on residues Asp121 and Asp139. Residues 134 to 154 (VFNVADIAICIGAGLLAIDAF) traverse the membrane as a helical segment.

This sequence belongs to the peptidase A8 family.

It localises to the cell inner membrane. It carries out the reaction Release of signal peptides from bacterial membrane prolipoproteins. Hydrolyzes -Xaa-Yaa-Zaa-|-(S,diacylglyceryl)Cys-, in which Xaa is hydrophobic (preferably Leu), and Yaa (Ala or Ser) and Zaa (Gly or Ala) have small, neutral side chains.. It participates in protein modification; lipoprotein biosynthesis (signal peptide cleavage). This protein specifically catalyzes the removal of signal peptides from prolipoproteins. In Histophilus somni (strain 2336) (Haemophilus somnus), this protein is Lipoprotein signal peptidase.